The primary structure comprises 227 residues: LexA repressor (227 aa).

The segment at residues Phe-26–Thr-46 is a DNA-binding region (H-T-H motif). Active-site for autocatalytic cleavage activity residues include Ser-147 and Lys-185.

The protein belongs to the peptidase S24 family. In terms of assembly, homodimer.

The catalysed reaction is Hydrolysis of Ala-|-Gly bond in repressor LexA.. Functionally, represses a number of genes involved in the response to DNA damage (SOS response), including recA and lexA. In the presence of single-stranded DNA, RecA interacts with LexA causing an autocatalytic cleavage which disrupts the DNA-binding part of LexA, leading to derepression of the SOS regulon and eventually DNA repair. This chain is LexA repressor, found in Hyphomonas neptunium (strain ATCC 15444).